Consider the following 151-residue polypeptide: Small ribosomal subunit protein uS15 (151 aa).

This sequence belongs to the universal ribosomal protein uS15 family.

This is Small ribosomal subunit protein uS15 (RPS13) from Candida maltosa (Yeast).